A 389-amino-acid chain; its full sequence is Choline/ethanolaminephosphotransferase 1 (389 aa).

The helical transmembrane segment at 40-60 (VFPLWMPPNMITLMGFMFLVT) threads the bilayer. Asparagine 48 provides a ligand contact to CDP-choline. Aspartate 95 and aspartate 98 together coordinate Mg(2+). Arginine 103 contacts CDP-choline. Residue aspartate 116 participates in Mg(2+) binding. The active-site Proton acceptor is histidine 117. Residue aspartate 120 participates in Mg(2+) binding. The next 7 membrane-spanning stretches (helical) occupy residues 141–161 (TFWF…EHYF), 176–196 (GLAL…EWWA), 221–241 (VLYM…VTNV), 252–272 (MVLA…VLIW), 280–300 (LIAT…GFLV), 322–344 (SLLY…GVPL), and 350–370 (VLLG…TSVI).

Belongs to the CDP-alcohol phosphatidyltransferase class-I family. Mg(2+) is required as a cofactor. Mn(2+) serves as cofactor.

The protein resides in the membrane. It catalyses the reaction CDP-ethanolamine + a 1,2-diacyl-sn-glycerol = a 1,2-diacyl-sn-glycero-3-phosphoethanolamine + CMP + H(+). The enzyme catalyses CDP-choline + a 1,2-diacyl-sn-glycerol = a 1,2-diacyl-sn-glycero-3-phosphocholine + CMP + H(+). It participates in phospholipid metabolism; phosphatidylethanolamine biosynthesis; phosphatidylethanolamine from ethanolamine: step 3/3. It functions in the pathway phospholipid metabolism; phosphatidylcholine biosynthesis; phosphatidylcholine from phosphocholine: step 2/2. Functionally, catalyzes both phosphatidylcholine and phosphatidylethanolamine biosynthesis from CDP-choline and CDP-ethanolamine, respectively. Has a higher cholinephosphotransferase activity than ethanolaminephosphotransferase activity. The sequence is that of Choline/ethanolaminephosphotransferase 1 (AAPT1) from Arabidopsis thaliana (Mouse-ear cress).